The primary structure comprises 396 residues: Vitamin K-dependent protein Z (396 aa).

The region spanning 1–46 is the Gla domain; sequence AGSYLLEELFEGHLEKECWEEICVYEEAREVFEDDETTDEFWRTYM. 13 positions are modified to 4-carboxyglutamate: Glu-7, Glu-8, Glu-11, Glu-15, Glu-17, Glu-20, Glu-21, Glu-26, Glu-27, Glu-30, Glu-33, Glu-36, and Glu-40. An intrachain disulfide couples Cys-18 to Cys-23. EGF-like domains are found at residues 47-83 and 85-126; these read GGSPCASQPCLNNGSCQDSIRGYACTCAPGYEGPNCA and AESE…RSCL. Disulfide bonds link Cys-51-Cys-62, Cys-56-Cys-71, Cys-73-Cys-82, Cys-89-Cys-101, Cys-97-Cys-110, Cys-112-Cys-125, and Cys-169-Cys-185. O-linked (Glc...) serine glycosylation is present at Ser-53. Asn-59 carries N-linked (GlcNAc...) asparagine glycosylation. At Asp-64 the chain carries (3R)-3-hydroxyaspartate. The Peptidase S1 domain maps to 135 to 357; it reads TLGPECCQRP…YALWLRQVTQ (223 aa). Residues Asn-191 and Asn-289 are each glycosylated (N-linked (GlcNAc...) asparagine). A disulfide bridge links Cys-284 with Cys-298. Positions 356 to 396 are disordered; sequence TQQPSRASPRGDRGQGRDGEPVPGDRGGRWAPTALPPGPLV. Residues 364–375 show a composition bias toward basic and acidic residues; sequence PRGDRGQGRDGE. Residue Thr-388 is glycosylated (O-linked (GalNAc...) threonine).

The protein belongs to the peptidase S1 family. In terms of processing, the iron and 2-oxoglutarate dependent 3-hydroxylation of aspartate and asparagine is (R) stereospecific within EGF domains. In terms of tissue distribution, plasma.

It is found in the secreted. Its function is as follows. Inhibits activity of the coagulation protease factor Xa in the presence of SERPINA10, calcium and phospholipids. Appears to assist hemostasis by binding thrombin and promoting its association with phospholipid vesicles. The protein is Vitamin K-dependent protein Z (PROZ) of Bos taurus (Bovine).